The primary structure comprises 1036 residues: Protein translocase subunit SecA, chloroplastic (1036 aa).

The N-terminal 76 residues, 1-76 (MESCARSASQ…KIGELMQVRA (76 aa)), are a transit peptide targeting the chloroplast. Residue 186 to 193 (MRTGEGKT) coordinates ATP. A disordered region spans residues 995–1036 (NQEQQQKGKPDSSNVENKRIGDANLNPVSVTESPSSDSPQNT). Over residues 1000-1015 (QKGKPDSSNVENKRIG) the composition is skewed to basic and acidic residues. The segment covering 1020–1036 (NPVSVTESPSSDSPQNT) has biased composition (polar residues).

Belongs to the SecA family.

It localises to the plastid. The protein localises to the chloroplast stroma. Its subcellular location is the chloroplast thylakoid membrane. The catalysed reaction is ATP + H2O + chloroplast-proteinSide 1 = ADP + phosphate + chloroplast-proteinSide 2.. Its function is as follows. Has a central role in coupling the hydrolysis of ATP to the transfer of proteins across the thylakoid membrane. The chain is Protein translocase subunit SecA, chloroplastic from Spinacia oleracea (Spinach).